Consider the following 723-residue polypeptide: MIYQAKTLQVKQLANGIAELSFCAPASVNKLDLHTLESLDKALDALAADSSVKGLLLSSDKEAFIVGADITEFLGLFAKPEAELDEWLQFANRIFNKLEDLPFPTLSALKGHTLGGGCECVLATDFRIGDATTSIGLPETKLGIMPGFGGTVRLPRLIGADSAMEIITQGKACRAEEALKVGLLDAIVDSDKLIDSAITTLTQAIEEKLDWQKRRQQKTSALTLSKLEAMMSFTMAKGMVAQVAGKHYPAPMTSVVTIEEAARLPRDAALDIERKHFIKLAKSTEAQALVGIFLNDQYIKGLAKQSAKAASQDTQHAAVLGAGIMGGGIAYQSALKGVPVLMKDIAPHSLELGMTEAAKLLNKQLERGKIDGFKMAGILASITPSLHYAGIDQADVIVEAVVENPKVKAAVLSEVEGLVDAETILTSNTSTIPINLLAKSLKRPQNFCGMHFFNPVHRMPLVEIIRGEHTSEDTINRVVAYAAKMGKSPIVVNDCPGFFVNRVLFPYFAGFSLLMRDGANFTEIDKVMERQFGWPMGPAYLLDVVGIDTAHHAQAVMAEGFPTRMAKSGREAIDALYEAKKFGQKNGSGFYQYTVDKKGKPKKAFSDDVLAILAPVCGAPQNFDPQTLIERTMIPMINEVVLCLEEGIIASAQEADMALVYGLGFPPFRGGVFRYLDTIGIANYVAMAEKYADLGALYQVPQLLKNMAQQGTSFYSAQQASAL.

The interval 1-189 (MIYQAKTLQV…KVGLLDAIVD (189 aa)) is enoyl-CoA hydratase/isomerase. D296 contacts substrate. A 3-hydroxyacyl-CoA dehydrogenase region spans residues 311-723 (SQDTQHAAVL…FYSAQQASAL (413 aa)). Residues M325, D344, 401-403 (VVE), K408, and S430 each bind NAD(+). The For 3-hydroxyacyl-CoA dehydrogenase activity role is filled by H451. N454 is a binding site for NAD(+). 2 residues coordinate substrate: N501 and Y661.

It in the N-terminal section; belongs to the enoyl-CoA hydratase/isomerase family. In the C-terminal section; belongs to the 3-hydroxyacyl-CoA dehydrogenase family. In terms of assembly, heterotetramer of two alpha chains (FadB) and two beta chains (FadA).

It carries out the reaction a (3S)-3-hydroxyacyl-CoA + NAD(+) = a 3-oxoacyl-CoA + NADH + H(+). The catalysed reaction is a (3S)-3-hydroxyacyl-CoA = a (2E)-enoyl-CoA + H2O. The enzyme catalyses a 4-saturated-(3S)-3-hydroxyacyl-CoA = a (3E)-enoyl-CoA + H2O. It catalyses the reaction (3S)-3-hydroxybutanoyl-CoA = (3R)-3-hydroxybutanoyl-CoA. It carries out the reaction a (3Z)-enoyl-CoA = a 4-saturated (2E)-enoyl-CoA. The catalysed reaction is a (3E)-enoyl-CoA = a 4-saturated (2E)-enoyl-CoA. The protein operates within lipid metabolism; fatty acid beta-oxidation. Involved in the aerobic and anaerobic degradation of long-chain fatty acids via beta-oxidation cycle. Catalyzes the formation of 3-oxoacyl-CoA from enoyl-CoA via L-3-hydroxyacyl-CoA. It can also use D-3-hydroxyacyl-CoA and cis-3-enoyl-CoA as substrate. In Vibrio cholerae serotype O1 (strain ATCC 39541 / Classical Ogawa 395 / O395), this protein is Fatty acid oxidation complex subunit alpha.